Reading from the N-terminus, the 460-residue chain is Elongation factor 1-alpha 3 (460 aa).

Residues 6–243 (KTHINIVVIG…DCIIPPQRPT (238 aa)) form the tr-type G domain. Positions 15–22 (GHVDSGKS) are G1. The segment at 71–75 (GITID) is G2. The segment at 92–95 (DAPG) is G3. A G4 region spans residues 154-157 (NKMD). Residues 195-197 (SGF) are G5. 5-glutamyl glycerylphosphorylethanolamine occurs at positions 302 and 375.

Belongs to the TRAFAC class translation factor GTPase superfamily. Classic translation factor GTPase family. EF-Tu/EF-1A subfamily.

It is found in the cytoplasm. This protein promotes the GTP-dependent binding of aminoacyl-tRNA to the A-site of ribosomes during protein biosynthesis. This chain is Elongation factor 1-alpha 3 (eft-3), found in Oscheius tipulae.